The following is a 292-amino-acid chain: Putative sugar lactone lactonase YvrE (292 aa).

A divalent metal cation is bound by residues Glu15, Asn146, and Asp196.

It belongs to the SMP-30/CGR1 family. A divalent metal cation is required as a cofactor.

The protein resides in the cytoplasm. This Bacillus subtilis (strain 168) protein is Putative sugar lactone lactonase YvrE (yvrE).